A 334-amino-acid chain; its full sequence is Ferredoxin--NADP reductase (334 aa).

7 residues coordinate FAD: D33, Q41, Y46, A86, F120, D286, and T327.

It belongs to the ferredoxin--NADP reductase type 2 family. Homodimer. FAD serves as cofactor.

It carries out the reaction 2 reduced [2Fe-2S]-[ferredoxin] + NADP(+) + H(+) = 2 oxidized [2Fe-2S]-[ferredoxin] + NADPH. The polypeptide is Ferredoxin--NADP reductase (Rickettsia massiliae (strain Mtu5)).